An 83-amino-acid chain; its full sequence is Spanin, outer lipoprotein subunit (83 aa).

Residues 1-50 (MSTLRELRLRRALKEQSMRYLLSIKKTLPRWKGALIGLFLICVATISGCA) form the signal peptide.

The protein belongs to the T7likevirus o-spanin family. Homodimer. Interacts (via C-terminus) with the spanin inner membrane subunit (via C-terminus). Part of the spanin complex which spans the entire periplasmic space. The spanin complex is composed of spanin inner membrane subunit and spanin outer membrane subunit.

Its subcellular location is the host cell outer membrane. Component of the spanin complex that disrupts the host outer membrane and participates in cell lysis during virus exit. The spanin complex conducts the final step in host lysis by disrupting the outer membrane after holin and endolysin action have permeabilized the inner membrane and degraded the host peptidoglycans. Host outer membrane disruption is possibly due to local fusion between the inner and outer membrane performed by the spanin complex. The chain is Spanin, outer lipoprotein subunit from Escherichia phage T7 (Bacteriophage T7).